The chain runs to 59 residues: UPF0434 protein COSY_0767 (59 aa).

The protein belongs to the UPF0434 family.

The protein is UPF0434 protein COSY_0767 of Vesicomyosocius okutanii subsp. Calyptogena okutanii (strain HA).